Reading from the N-terminus, the 118-residue chain is Large ribosomal subunit protein bL20 (118 aa).

This sequence belongs to the bacterial ribosomal protein bL20 family.

In terms of biological role, binds directly to 23S ribosomal RNA and is necessary for the in vitro assembly process of the 50S ribosomal subunit. It is not involved in the protein synthesizing functions of that subunit. This chain is Large ribosomal subunit protein bL20, found in Fervidobacterium nodosum (strain ATCC 35602 / DSM 5306 / Rt17-B1).